The sequence spans 334 residues: tRNA-dihydrouridine(20/20a) synthase (334 aa).

Residues 17 to 19 and Q70 contribute to the FMN site; that span reads PMM. Residue C100 is the Proton donor of the active site. FMN contacts are provided by residues K139, H171, 211-213, and 233-234; these read NGG and GR.

It belongs to the Dus family. DusA subfamily. It depends on FMN as a cofactor.

The enzyme catalyses 5,6-dihydrouridine(20) in tRNA + NADP(+) = uridine(20) in tRNA + NADPH + H(+). It catalyses the reaction 5,6-dihydrouridine(20) in tRNA + NAD(+) = uridine(20) in tRNA + NADH + H(+). It carries out the reaction 5,6-dihydrouridine(20a) in tRNA + NADP(+) = uridine(20a) in tRNA + NADPH + H(+). The catalysed reaction is 5,6-dihydrouridine(20a) in tRNA + NAD(+) = uridine(20a) in tRNA + NADH + H(+). Its function is as follows. Catalyzes the synthesis of 5,6-dihydrouridine (D), a modified base found in the D-loop of most tRNAs, via the reduction of the C5-C6 double bond in target uridines. Specifically modifies U20 and U20a in tRNAs. This Synechocystis sp. (strain ATCC 27184 / PCC 6803 / Kazusa) protein is tRNA-dihydrouridine(20/20a) synthase (dus2).